A 1311-amino-acid polypeptide reads, in one-letter code: Protein PARALOG OF AIPP2 (1311 aa).

3 disordered regions span residues 1 to 21 (MADR…KVES), 114 to 141 (ISDD…VSAS), and 178 to 280 (GNKD…EMVE). The span at 213-240 (NHDDRVSSEKGNFKEKSRPGGNKERQEP) shows a compositional bias: basic and acidic residues. The span at 258–270 (SKSSSSNSSAVSE) shows a compositional bias: low complexity. The PHD-type zinc finger occupies 283 to 334 (VKVCDICGDAGREDLLAICSGCSDGAEHTYCMREMLDEVPEGDWLCEECAEE). Positions 286, 289, 301, 304, 310, 313, 328, and 331 each coordinate Zn(2+). A coiled-coil region spans residues 328 to 348 (CEECAEEAEKQKQEAKRKRET). 8 disordered regions span residues 369–390 (PDAK…ILPR), 411–440 (NHQT…FLKS), 460–701 (HPRQ…EDLN), 975–1050 (TNPQ…PSKK), 1059–1078 (EAGV…GDSL), 1087–1138 (EQEL…NPAN), 1152–1186 (NDGL…GIMK), and 1249–1311 (LSRS…DLPR). Positions 411–431 (NHQTSFSDDTESARSAGSQLQ) are enriched in polar residues. Positions 460-472 (HPRQKTGKEDTAL) are enriched in basic and acidic residues. A compositionally biased stretch (polar residues) spans 487–502 (PSRTTDAGNSGGSDSQ). Positions 512–528 (HSQEGKSLKQVKDRNRE) are enriched in basic and acidic residues. The segment covering 529 to 552 (ANASASSIDQKLKSRGNSSVSHAN) has biased composition (polar residues). Positions 553-566 (NNRDLKGLQSDGKR) are enriched in basic and acidic residues. The span at 569 to 607 (LTKQVSNLSRNRLENSVVSGGDISTNEKCSASEQSSSQA) shows a compositional bias: polar residues. Over residues 640 to 653 (VPREVGKKSKEAFS) the composition is skewed to basic and acidic residues. 3 stretches are compositionally biased toward polar residues: residues 668–694 (PSSQ…STTK), 977–988 (PQKNTSLPTSNV), and 1014–1025 (LRESSSNGIETR). A compositionally biased stretch (basic and acidic residues) spans 1026-1050 (NGTDARSHENPNNRESSIERSPSKK). The span at 1087–1096 (EQELGGRKDL) shows a compositional bias: basic and acidic residues. Residues 1250 to 1263 (SRSSNSGEQSNNSM) are compositionally biased toward polar residues. Positions 1256-1276 (GEQSNNSMNKEKQKADEEEED) form a coiled coil. Low complexity predominate over residues 1280-1289 (VAASLSLSLS).

In terms of assembly, part of the BAH-PHD bivalent histone reader complex that contains AIPP2, PAIPP2 and AIPP3/BDT1; the BAH-PHD module associates with CPL2 to form the BAH-PHD-CPL2 complex (BPC) for transcriptional repression. Binds directly to AIPP3/BDT1 and CPL2, but not to AIPP2. Expressed ubiquitously.

Its function is as follows. Together with AIPP2 and AIPP3/BDT1, cooperates to form a BAH-PHD bivalent histone reader complex able to read histone H3 lysine 27 trimethylation (H3K27me3) and low-methylated H3K4 histone marks in order to regulate transcription, especially to prevent early flowering; promotes AIPP3/BDT1 binding to H3K27me3. CPL2 is subsequently recruited to form a BAH-PHD-CPL2 complex (BPC) in order to silence several H3K27me3 and low-methylated H3K4 enriched loci, including AGO5, via the phosphorylation state-dependent inhibition of Pol II release from the transcriptional start site (e.g. Ser5P-Pol II dephosphorylation). The BPC complex represses flowering by inhibiting the expression of several genes, including AGL6, FT, FUL and SOC1. In Arabidopsis thaliana (Mouse-ear cress), this protein is Protein PARALOG OF AIPP2.